Consider the following 160-residue polypeptide: 3-hydroxyacyl-[acyl-carrier-protein] dehydratase FabZ (160 aa).

H59 is a catalytic residue.

The protein belongs to the thioester dehydratase family. FabZ subfamily.

The protein localises to the cytoplasm. It carries out the reaction a (3R)-hydroxyacyl-[ACP] = a (2E)-enoyl-[ACP] + H2O. In terms of biological role, involved in unsaturated fatty acids biosynthesis. Catalyzes the dehydration of short chain beta-hydroxyacyl-ACPs and long chain saturated and unsaturated beta-hydroxyacyl-ACPs. The chain is 3-hydroxyacyl-[acyl-carrier-protein] dehydratase FabZ from Burkholderia thailandensis (strain ATCC 700388 / DSM 13276 / CCUG 48851 / CIP 106301 / E264).